Consider the following 119-residue polypeptide: uncharacterized protein (119 aa).

A helical transmembrane segment spans residues 30 to 50; sequence LMTLPCVLFLSSFGQAVIVVL.

It is found in the membrane. This is an uncharacterized protein from Saccharomyces cerevisiae (strain ATCC 204508 / S288c) (Baker's yeast).